The sequence spans 318 residues: Protoheme IX farnesyltransferase (318 aa).

The next 9 helical transmembrane spans lie at 34–54 (VMSLVVFTAFAGLVLAPGQIN), 55–75 (PVIGFIAILCIAIGAGASGAL), 95–115 (IPAGKILPQEALAFGLTLSAF), 118–138 (IILGLAVNWLAAGLLAFTIFF), 155–175 (IVIGGAAGAFPPMIGWACVTG), 182–202 (IVLFLIIFLWTPAHFWALALF), 228–250 (IVVYALLTALSGICPTLLGFASL), 254–273 (AFATALGLGFIWYSLAVLRM), and 287–307 (FAFSIAYLFAIFSALLVDYMI).

This sequence belongs to the UbiA prenyltransferase family. Protoheme IX farnesyltransferase subfamily.

It localises to the cell inner membrane. It carries out the reaction heme b + (2E,6E)-farnesyl diphosphate + H2O = Fe(II)-heme o + diphosphate. It functions in the pathway porphyrin-containing compound metabolism; heme O biosynthesis; heme O from protoheme: step 1/1. Converts heme B (protoheme IX) to heme O by substitution of the vinyl group on carbon 2 of heme B porphyrin ring with a hydroxyethyl farnesyl side group. The protein is Protoheme IX farnesyltransferase of Sinorhizobium fredii (strain NBRC 101917 / NGR234).